Here is a 205-residue protein sequence, read N- to C-terminus: Protein GrpE (205 aa).

The disordered stretch occupies residues K172–A205. Low complexity predominate over residues P177–A195.

It belongs to the GrpE family. Homodimer.

The protein localises to the cytoplasm. Participates actively in the response to hyperosmotic and heat shock by preventing the aggregation of stress-denatured proteins, in association with DnaK and GrpE. It is the nucleotide exchange factor for DnaK and may function as a thermosensor. Unfolded proteins bind initially to DnaJ; upon interaction with the DnaJ-bound protein, DnaK hydrolyzes its bound ATP, resulting in the formation of a stable complex. GrpE releases ADP from DnaK; ATP binding to DnaK triggers the release of the substrate protein, thus completing the reaction cycle. Several rounds of ATP-dependent interactions between DnaJ, DnaK and GrpE are required for fully efficient folding. This Caulobacter sp. (strain K31) protein is Protein GrpE.